The following is a 179-amino-acid chain: Large ribosomal subunit protein uL5 (179 aa).

Belongs to the universal ribosomal protein uL5 family. As to quaternary structure, part of the 50S ribosomal subunit; part of the 5S rRNA/L5/L18/L25 subcomplex. Contacts the 5S rRNA and the P site tRNA. Forms a bridge to the 30S subunit in the 70S ribosome.

In terms of biological role, this is one of the proteins that bind and probably mediate the attachment of the 5S RNA into the large ribosomal subunit, where it forms part of the central protuberance. In the 70S ribosome it contacts protein S13 of the 30S subunit (bridge B1b), connecting the 2 subunits; this bridge is implicated in subunit movement. Contacts the P site tRNA; the 5S rRNA and some of its associated proteins might help stabilize positioning of ribosome-bound tRNAs. This is Large ribosomal subunit protein uL5 from Tolumonas auensis (strain DSM 9187 / NBRC 110442 / TA 4).